The following is a 351-amino-acid chain: Large ribosomal subunit protein uL3 (351 aa).

2 disordered regions span residues 1-31 and 246-271; these read MGHR…TPRT and KGSR…GQLG.

This sequence belongs to the universal ribosomal protein uL3 family. As to quaternary structure, part of the 50S ribosomal subunit. Forms a cluster with proteins L14 and L24e.

Its function is as follows. One of the primary rRNA binding proteins, it binds directly near the 3'-end of the 23S rRNA, where it nucleates assembly of the 50S subunit. This is Large ribosomal subunit protein uL3 from Saccharolobus solfataricus (strain ATCC 35092 / DSM 1617 / JCM 11322 / P2) (Sulfolobus solfataricus).